The following is a 452-amino-acid chain: NADH-ubiquinone oxidoreductase chain 4 (452 aa).

The next 14 membrane-spanning stretches (helical) occupy residues 7-27 (VLMS…IIAL), 57-77 (MMSF…ILAS), 95-115 (VILL…MFYI), 116-136 (WFEA…YQPE), 145-165 (MIYT…IFIV), 186-206 (MALA…MFTV), 218-238 (PIAG…YGIL), 251-271 (TSSL…LICL), 278-298 (SLIA…ALMS), 303-323 (FQAA…LFVM), 336-356 (LFLM…WFLF), 360-380 (NMAA…TSIL), 386-406 (AFIL…YMYT), and 428-448 (LTLM…PELI).

It belongs to the complex I subunit 4 family.

It localises to the mitochondrion membrane. It carries out the reaction a ubiquinone + NADH + 5 H(+)(in) = a ubiquinol + NAD(+) + 4 H(+)(out). Core subunit of the mitochondrial membrane respiratory chain NADH dehydrogenase (Complex I) that is believed to belong to the minimal assembly required for catalysis. Complex I functions in the transfer of electrons from NADH to the respiratory chain. The immediate electron acceptor for the enzyme is believed to be ubiquinone. This Lumbricus terrestris (Common earthworm) protein is NADH-ubiquinone oxidoreductase chain 4 (ND4).